We begin with the raw amino-acid sequence, 937 residues long: AP-2 complex subunit beta (937 aa).

N-acetylthreonine is present on Thr2. Residue Ser4 is modified to Phosphoserine. Lys265 is modified (N6-acetyllysine). Phosphotyrosine is present on residues Tyr737 and Tyr928.

The protein belongs to the adaptor complexes large subunit family. Adapter protein complex 2 (AP-2) is a heterotetramer composed of two large adaptins (alpha-type subunit AP2A1 or AP2A2 and beta-type subunit AP2B1), a medium adaptin (mu-type subunit AP2M1) and a small adaptin (sigma-type subunit AP2S1). Interacts with EPN1. Interacts with EPS15; clathrin competes with EPS15. Interacts with SNAP91; clathrin competes with SNAP91. Interacts with CLTC; clathrin competes with EPS15, SNAP91 and PIP5K1C. Interacts with LDLRAP1. Interacts with AMPH and BIN1. Interacts with ARF6 (GDP-bound). Interacts (dephosphorylated at Tyr-737) with ARRB1; phosphorylation of AP2B1 at Tyr-737 disrupts the interaction. Interacts with SLC2A8. Interacts with SCYL1 and SCYL2. Interacts with TGFBR1 and TGFBR2. Interacts with PIP5K1C; clathrin competes with PIP5K1C. Interacts with DENND1B. Interacts with FCHO1. Interacts with RFTN1. Interacts with KIAA1107. Together with AP2A1 or AP2A2 and AP2M1, it interacts with ADAM10; this interaction facilitates ADAM10 endocytosis from the plasma membrane during long-term potentiation in hippocampal neurons. The N-terminus is blocked. In terms of processing, phosphorylation at Tyr-737 by SRC occurs at the plasma membrane in clathrin-coated vesicles (CCVs).

It is found in the cell membrane. The protein localises to the membrane. Its subcellular location is the coated pit. Component of the adaptor protein complex 2 (AP-2). Adaptor protein complexes function in protein transport via transport vesicles in different membrane traffic pathways. Adaptor protein complexes are vesicle coat components and appear to be involved in cargo selection and vesicle formation. AP-2 is involved in clathrin-dependent endocytosis in which cargo proteins are incorporated into vesicles surrounded by clathrin (clathrin-coated vesicles, CCVs) which are destined for fusion with the early endosome. The clathrin lattice serves as a mechanical scaffold but is itself unable to bind directly to membrane components. Clathrin-associated adaptor protein (AP) complexes which can bind directly to both the clathrin lattice and to the lipid and protein components of membranes are considered to be the major clathrin adaptors contributing the CCV formation. AP-2 also serves as a cargo receptor to selectively sort the membrane proteins involved in receptor-mediated endocytosis. AP-2 seems to play a role in the recycling of synaptic vesicle membranes from the presynaptic surface. AP-2 recognizes Y-X-X-[FILMV] (Y-X-X-Phi) and [ED]-X-X-X-L-[LI] endocytosis signal motifs within the cytosolic tails of transmembrane cargo molecules. AP-2 may also play a role in maintaining normal post-endocytic trafficking through the ARF6-regulated, non-clathrin pathway. During long-term potentiation in hippocampal neurons, AP-2 is responsible for the endocytosis of ADAM10. The AP-2 beta subunit acts via its C-terminal appendage domain as a scaffolding platform for endocytic accessory proteins; at least some clathrin-associated sorting proteins (CLASPs) are recognized by their [DE]-X(1,2)-F-X-X-[FL]-X-X-X-R motif. The AP-2 beta subunit binds to clathrin heavy chain, promoting clathrin lattice assembly; clathrin displaces at least some CLASPs from AP2B1 which probably then can be positioned for further coat assembly. The polypeptide is AP-2 complex subunit beta (AP2B1) (Bos taurus (Bovine)).